Reading from the N-terminus, the 158-residue chain is Large ribosomal subunit protein uL22 (158 aa).

This sequence belongs to the universal ribosomal protein uL22 family. In terms of assembly, part of the 50S ribosomal subunit.

Its function is as follows. This protein binds specifically to 23S rRNA. It makes multiple contacts with different domains of the 23S rRNA in the assembled 50S subunit and ribosome. In terms of biological role, the globular domain of the protein is located near the polypeptide exit tunnel on the outside of the subunit, while an extended beta-hairpin is found that lines the wall of the exit tunnel in the center of the 70S ribosome. The polypeptide is Large ribosomal subunit protein uL22 (Haloquadratum walsbyi (strain DSM 16790 / HBSQ001)).